The following is a 504-amino-acid chain: Peroxisomal catalase (504 aa).

Catalysis depends on residues His-63 and Asn-136. Tyr-345 is a binding site for heme. Residues 502-504 (NKF) carry the Microbody targeting signal motif.

This sequence belongs to the catalase family. Heme is required as a cofactor.

The protein resides in the peroxisome matrix. The catalysed reaction is 2 H2O2 = O2 + 2 H2O. Functionally, catalyzes the degradation of hydrogen peroxide (H(2)O(2)) generated by peroxisomal oxidases to water and oxygen, thereby protecting cells from the toxic effects of hydrogen peroxide. The protein is Peroxisomal catalase (CTA1) of Candida boidinii (Yeast).